Reading from the N-terminus, the 760-residue chain is Dipeptidyl peptidase 4 (760 aa).

Residues 1-6 (MKTPWK) are Cytoplasmic-facing. The chain crosses the membrane as a helical; Signal-anchor for type II membrane protein span at residues 7–28 (VLLGLLGVAALVTIITVPIVLL). Residues 29–760 (SKDEAAADSR…HFLQQCFSLH (732 aa)) lie on the Extracellular side of the membrane. Asn83, Asn90, Asn144, Asn213, Asn223, Asn315, and Asn328 each carry an N-linked (GlcNAc...) asparagine glycan. 4 disulfides stabilise this stretch: Cys322/Cys333, Cys379/Cys388, Cys438/Cys441, and Cys448/Cys466. The N-linked (GlcNAc...) asparagine glycan is linked to Asn514. The active-site Charge relay system is the Ser624. A disulfide bridge connects residues Cys643 and Cys756. Asn679 carries an N-linked (GlcNAc...) asparagine glycan. Active-site charge relay system residues include Asp702 and His734.

The protein belongs to the peptidase S9B family. DPPIV subfamily. As to quaternary structure, monomer. Homodimer. Heterodimer with Seprase (FAP). Requires homodimerization for optimal dipeptidyl peptidase activity and T-cell costimulation. Found in a membrane raft complex, at least composed of BCL10, CARD11, DPP4 and IKBKB. Associates with collagen. Interacts with PTPRC; the interaction is enhanced in an interleukin-12-dependent manner in activated lymphocytes. Interacts (via extracellular domain) with ADA; does not inhibit its dipeptidyl peptidase activity. Interacts with CAV1 (via the N-terminus); the interaction is direct. Interacts (via cytoplasmic tail) with CARD11 (via PDZ domain); its homodimerization is necessary for interaction with CARD11. Interacts with IGF2R; the interaction is direct. Interacts with GPC3. In terms of processing, the soluble form (Dipeptidyl peptidase 4 soluble form also named SDPP) derives from the membrane form (Dipeptidyl peptidase 4 membrane form also named MDPP) by proteolytic processing. N- and O-Glycosylated. Post-translationally, phosphorylated. Mannose 6-phosphate residues in the carbohydrate moiety are necessary for interaction with IGF2R in activated T-cells. Mannose 6-phosphorylation is induced during T-cell activation.

The protein resides in the secreted. Its subcellular location is the cell membrane. The protein localises to the apical cell membrane. It localises to the cell projection. It is found in the invadopodium membrane. The protein resides in the lamellipodium membrane. Its subcellular location is the cell junction. The protein localises to the membrane raft. The enzyme catalyses Release of an N-terminal dipeptide, Xaa-Yaa-|-Zaa-, from a polypeptide, preferentially when Yaa is Pro, provided Zaa is neither Pro nor hydroxyproline.. With respect to regulation, inhibited by GPC3 and diprotin A. Cell surface glycoprotein receptor involved in the costimulatory signal essential for T-cell receptor (TCR)-mediated T-cell activation. Acts as a positive regulator of T-cell coactivation, by binding at least ADA, CAV1, IGF2R, and PTPRC. Its binding to CAV1 and CARD11 induces T-cell proliferation and NF-kappa-B activation in a T-cell receptor/CD3-dependent manner. Its interaction with ADA also regulates lymphocyte-epithelial cell adhesion. In association with FAP is involved in the pericellular proteolysis of the extracellular matrix (ECM), the migration and invasion of endothelial cells into the ECM. May be involved in the promotion of lymphatic endothelial cells adhesion, migration and tube formation. When overexpressed, enhanced cell proliferation, a process inhibited by GPC3. Also acts as a serine exopeptidase with a dipeptidyl peptidase activity that regulates various physiological processes by cleaving peptides in the circulation, including many chemokines, mitogenic growth factors, neuropeptides and peptide hormones. Removes N-terminal dipeptides sequentially from polypeptides having unsubstituted N-termini provided that the penultimate residue is proline. This chain is Dipeptidyl peptidase 4 (Dpp4), found in Mus musculus (Mouse).